The following is a 439-amino-acid chain: Homogentisate 1,2-dioxygenase (439 aa).

Residues histidine 335, glutamate 341, and histidine 371 each coordinate Fe cation.

This sequence belongs to the homogentisate dioxygenase family. Fe cation is required as a cofactor.

It catalyses the reaction homogentisate + O2 = 4-maleylacetoacetate + H(+). It functions in the pathway amino-acid degradation; L-phenylalanine degradation; acetoacetate and fumarate from L-phenylalanine: step 4/6. The protein is Homogentisate 1,2-dioxygenase of Drosophila melanogaster (Fruit fly).